Reading from the N-terminus, the 50-residue chain is Protein PsbN (50 aa).

The chain crosses the membrane as a helical span at residues Ile14–Phe34.

Belongs to the PsbN family.

Its subcellular location is the cellular thylakoid membrane. May play a role in photosystem I and II biogenesis. This is Protein PsbN from Prochlorococcus marinus (strain MIT 9301).